The following is a 713-amino-acid chain: Leucine-rich repeat neuronal protein 2 (713 aa).

The signal sequence occupies residues 1–18 (MRLLVAPLLLAWVAGATA). Over 19-630 (AVPVVPWHVP…CHRALGDRPG (612 aa)) the chain is Extracellular. The LRRNT domain maps to 20-69 (VPVVPWHVPCPPQCACQIRPWYTPRSSYREATTVDCNDLFLTAVPPALPA). LRR repeat units lie at residues 70–91 (GTQT…ELGY), 94–115 (NLTE…DFHA), 118–139 (QLLS…SFAG), 142–163 (SLQE…AFSG), 166–187 (NLLR…WFEM), 190–211 (NLEI…NFRP), 214–235 (NLRS…ALEG), 238–259 (SLES…ALEQ), 262–283 (GLKF…DFAN), 286–305 (HLKE…DKFA), 311–333 (ELTK…AFHH), and 336–357 (QMET…TVES). N-linked (GlcNAc...) asparagine glycosylation is present at asparagine 94. The LRRCT domain maps to 369–422 (NPIRCDCVIRWANATGTRVRFIEPQSTLCAEPPDLQRLPVREVPFREMTDHCLP). N-linked (GlcNAc...) asparagine glycosylation is present at asparagine 381. The Ig-like C2-type domain occupies 422–511 (PLISPRSFPP…LVGADTKTVS (90 aa)). An intrachain disulfide couples cysteine 445 to cysteine 497. 2 N-linked (GlcNAc...) asparagine glycosylation sites follow: asparagine 555 and asparagine 583. The chain crosses the membrane as a helical span at residues 631-651 (LIAILALAVLLLAAGLAAHLG). The Cytoplasmic portion of the chain corresponds to 652–713 (TGQPRKGVGG…TLLPPLSQNS (62 aa)).

In terms of tissue distribution, overamplified in malignant gliomas.

Its subcellular location is the membrane. This is Leucine-rich repeat neuronal protein 2 (LRRN2) from Homo sapiens (Human).